Here is a 248-residue protein sequence, read N- to C-terminus: ATP synthase subunit a (248 aa).

The next 5 membrane-spanning stretches (helical) occupy residues Gly31–Gly51, Val90–Phe110, Ile129–Ser149, Val195–Phe215, and Leu216–Glu236.

Belongs to the ATPase A chain family. F-type ATPases have 2 components, CF(1) - the catalytic core - and CF(0) - the membrane proton channel. CF(1) has five subunits: alpha(3), beta(3), gamma(1), delta(1), epsilon(1). CF(0) has four main subunits: a, b, b' and c.

Its subcellular location is the cellular thylakoid membrane. In terms of biological role, key component of the proton channel; it plays a direct role in the translocation of protons across the membrane. This chain is ATP synthase subunit a, found in Synechococcus sp. (strain JA-2-3B'a(2-13)) (Cyanobacteria bacterium Yellowstone B-Prime).